The primary structure comprises 396 residues: Ribosomal RNA large subunit methyltransferase G (396 aa).

Belongs to the methyltransferase superfamily. RlmG family.

The protein localises to the cytoplasm. It carries out the reaction guanosine(1835) in 23S rRNA + S-adenosyl-L-methionine = N(2)-methylguanosine(1835) in 23S rRNA + S-adenosyl-L-homocysteine + H(+). In terms of biological role, specifically methylates the guanine in position 1835 (m2G1835) of 23S rRNA. The sequence is that of Ribosomal RNA large subunit methyltransferase G from Yersinia enterocolitica serotype O:8 / biotype 1B (strain NCTC 13174 / 8081).